The primary structure comprises 244 residues: MNIDLNADVGEGCASDSELLTLVSSANIACGFHAGDAQTMLTSVREALKNGVAIGAHPSFPDRDNFGRTAMALPPETVYAQTLYQIGALGAIVQAQGSVMRHVKPHGMLYNQAAKDPHLAQAIAKAVHDYDPSLILVGLAGSELIRAGERHRLVTRQEVFADRGYQADGSLVPRMQPGALIHDEEQALAQTLDMVQAGRVKSVTGVWTTVTAQTVCIHGDGEYALAFARRLRAAFNARNIHVIA.

Belongs to the LamB/PxpA family. In terms of assembly, forms a complex composed of PxpA, PxpB and PxpC.

It catalyses the reaction 5-oxo-L-proline + ATP + 2 H2O = L-glutamate + ADP + phosphate + H(+). Its function is as follows. Catalyzes the cleavage of 5-oxoproline to form L-glutamate coupled to the hydrolysis of ATP to ADP and inorganic phosphate. This chain is 5-oxoprolinase subunit A, found in Salmonella dublin (strain CT_02021853).